The primary structure comprises 2068 residues: uncharacterized protein (2068 aa).

2 helical membrane-spanning segments follow: residues F3–S23 and T51–I71. Basic and acidic residues predominate over residues Q975–Q998. The segment at Q975–V1030 is disordered. The segment covering E999–Q1018 has biased composition (acidic residues). Residues F1890–Y1910 form a helical membrane-spanning segment.

The protein localises to the membrane. This is an uncharacterized protein from Plasmodium falciparum (isolate 3D7).